The following is a 236-amino-acid chain: Urease accessory protein UreF (236 aa).

Belongs to the UreF family. In terms of assembly, ureD, UreF and UreG form a complex that acts as a GTP-hydrolysis-dependent molecular chaperone, activating the urease apoprotein by helping to assemble the nickel containing metallocenter of UreC. The UreE protein probably delivers the nickel.

The protein localises to the cytoplasm. Its function is as follows. Required for maturation of urease via the functional incorporation of the urease nickel metallocenter. This Synechocystis sp. (strain ATCC 27184 / PCC 6803 / Kazusa) protein is Urease accessory protein UreF.